The sequence spans 144 residues: Large ribosomal subunit protein uL16 (144 aa).

The span at 1 to 16 (MLIPKRVKYRKQHRPR) shows a compositional bias: basic residues. A disordered region spans residues 1–25 (MLIPKRVKYRKQHRPRGNGGVSKGG).

This sequence belongs to the universal ribosomal protein uL16 family. In terms of assembly, part of the 50S ribosomal subunit.

Binds 23S rRNA and is also seen to make contacts with the A and possibly P site tRNAs. The sequence is that of Large ribosomal subunit protein uL16 from Desulforamulus reducens (strain ATCC BAA-1160 / DSM 100696 / MI-1) (Desulfotomaculum reducens).